The primary structure comprises 267 residues: Small ribosomal subunit protein uS2 (267 aa).

The segment at 226-267 (AAAPNSASVREEEFSAESADEGKGRRAPAKKGEKKADAPAAE) is disordered. Over residues 245-267 (DEGKGRRAPAKKGEKKADAPAAE) the composition is skewed to basic and acidic residues.

This sequence belongs to the universal ribosomal protein uS2 family.

The sequence is that of Small ribosomal subunit protein uS2 from Xanthomonas oryzae pv. oryzae (strain MAFF 311018).